The chain runs to 313 residues: Olfactory receptor 8C8 (313 aa).

At 1-27 the chain is on the extracellular side; the sequence is MMQITMENKSSVSEFILMGLTDQPELQ. N-linked (GlcNAc...) asparagine glycosylation occurs at Asn8. A helical transmembrane segment spans residues 28–48; sequence LPLFVLFLMNYTATVMGNLTL. Over 49 to 59 the chain is Cytoplasmic; it reads MNLICLNSNLH. The helical transmembrane segment at 60–80 threads the bilayer; sequence TPMYFFLFNLSFIDFCYSMVF. Residues 81-96 lie on the Extracellular side of the membrane; the sequence is TPKMLMSFILEKNTIS. A helical membrane pass occupies residues 97–117; it reads FGGCMAQLFFFLFFVNSESYV. Residues Cys100 and Cys192 are joined by a disulfide bond. Topologically, residues 118–136 are cytoplasmic; it reads LTAMAYDRYVAICKPLTYK. A helical membrane pass occupies residues 137 to 157; sequence VIMSPKICCLLIFSSYLMGFA. Residues 158–208 are Extracellular-facing; sequence SAMAHTGCMIRLSFCDSNIINHYMCDIFPLLPLSCSSTYVNELMSSVVVGS. A helical transmembrane segment spans residues 209–229; it reads AIILCCLIILISYAMILFNII. Topologically, residues 230 to 239 are cytoplasmic; it reads HMSSGKGWSK. The helical transmembrane segment at 240-260 threads the bilayer; it reads ALGTCGSHIITVSLFYGSGLL. Residues 261-274 lie on the Extracellular side of the membrane; the sequence is AYVKPSSAKTVGQG. The chain crosses the membrane as a helical span at residues 275-295; it reads KFFSVFYTLLVPMLNPLIYSL. Over 296–313 the chain is Cytoplasmic; the sequence is RNKDVKLAVKKTWKRITS.

Belongs to the G-protein coupled receptor 1 family. As to expression, expressed in neurons in the olfactory epithelium.

It localises to the cell membrane. Functionally, potential odorant receptor. This Mus musculus (Mouse) protein is Olfactory receptor 8C8.